The following is a 70-amino-acid chain: Large ribosomal subunit protein bL31c (70 aa).

Belongs to the bacterial ribosomal protein bL31 family. Type A subfamily. As to quaternary structure, part of the 50S ribosomal subunit.

The protein localises to the plastid. It localises to the chloroplast. In terms of biological role, binds the 23S rRNA. This chain is Large ribosomal subunit protein bL31c, found in Porphyra purpurea (Red seaweed).